Reading from the N-terminus, the 152-residue chain is Flagellar assembly factor FliW (152 aa).

Belongs to the FliW family. As to quaternary structure, interacts with translational regulator CsrA and flagellin(s).

It is found in the cytoplasm. In terms of biological role, acts as an anti-CsrA protein, binds CsrA and prevents it from repressing translation of its target genes, one of which is flagellin. Binds to flagellin and participates in the assembly of the flagellum. The sequence is that of Flagellar assembly factor FliW from Caldicellulosiruptor bescii (strain ATCC BAA-1888 / DSM 6725 / KCTC 15123 / Z-1320) (Anaerocellum thermophilum).